Consider the following 408-residue polypeptide: Protein CNPPD1 (408 aa).

Residues 233-253 (CLLAVAYVSSVALAVASMAVI) form a helical membrane-spanning segment.

The protein belongs to the CNPPD1 family.

It is found in the membrane. The polypeptide is Protein CNPPD1 (Cnppd1) (Rattus norvegicus (Rat)).